The chain runs to 81 residues: ATP synthase subunit C, plastid (81 aa).

Helical transmembrane passes span P3–G23 and L57–A77.

The protein belongs to the ATPase C chain family. F-type ATPases have 2 components, F(1) - the catalytic core - and F(0) - the membrane proton channel. F(1) has five subunits: alpha(3), beta(3), gamma(1), delta(1), epsilon(1). F(0) has four main subunits: a(1), b(1), b'(1) and c(10-14). The alpha and beta chains form an alternating ring which encloses part of the gamma chain. F(1) is attached to F(0) by a central stalk formed by the gamma and epsilon chains, while a peripheral stalk is formed by the delta, b and b' chains.

It is found in the plastid membrane. F(1)F(0) ATP synthase produces ATP from ADP in the presence of a proton or sodium gradient. F-type ATPases consist of two structural domains, F(1) containing the extramembraneous catalytic core and F(0) containing the membrane proton channel, linked together by a central stalk and a peripheral stalk. During catalysis, ATP synthesis in the catalytic domain of F(1) is coupled via a rotary mechanism of the central stalk subunits to proton translocation. Its function is as follows. Key component of the F(0) channel; it plays a direct role in translocation across the membrane. A homomeric c-ring of between 10-14 subunits forms the central stalk rotor element with the F(1) delta and epsilon subunits. This is ATP synthase subunit C, plastid from Cuscuta gronovii (Common dodder).